The sequence spans 103 residues: Large ribosomal subunit protein bL21 (103 aa).

The protein belongs to the bacterial ribosomal protein bL21 family. As to quaternary structure, part of the 50S ribosomal subunit. Contacts protein L20.

In terms of biological role, this protein binds to 23S rRNA in the presence of protein L20. The polypeptide is Large ribosomal subunit protein bL21 (Mannheimia succiniciproducens (strain KCTC 0769BP / MBEL55E)).